Here is a 279-residue protein sequence, read N- to C-terminus: Undecaprenyl-diphosphatase (279 aa).

The next 6 helical transmembrane spans lie at 45 to 65 (FVEM…IVIY), 85 to 105 (WQLW…ALPF), 113 to 133 (FNFM…FIWV), 188 to 208 (SVAA…YSGL), 226 to 246 (LILL…IRFL), and 255 to 275 (FTIF…YWLV).

Belongs to the UppP family.

The protein localises to the cell membrane. It carries out the reaction di-trans,octa-cis-undecaprenyl diphosphate + H2O = di-trans,octa-cis-undecaprenyl phosphate + phosphate + H(+). Catalyzes the dephosphorylation of undecaprenyl diphosphate (UPP). Confers resistance to bacitracin. This chain is Undecaprenyl-diphosphatase, found in Streptococcus agalactiae serotype III (strain NEM316).